The primary structure comprises 210 residues: Molybdenum cofactor guanylyltransferase (210 aa).

Residues 9-11, Lys-21, Asp-66, and Asp-95 contribute to the GTP site; that span reads LAG. Asp-95 serves as a coordination point for Mg(2+).

It belongs to the MobA family. In terms of assembly, monomer. The cofactor is Mg(2+).

The protein resides in the cytoplasm. It catalyses the reaction Mo-molybdopterin + GTP + H(+) = Mo-molybdopterin guanine dinucleotide + diphosphate. Its function is as follows. Transfers a GMP moiety from GTP to Mo-molybdopterin (Mo-MPT) cofactor (Moco or molybdenum cofactor) to form Mo-molybdopterin guanine dinucleotide (Mo-MGD) cofactor. This chain is Molybdenum cofactor guanylyltransferase, found in Syntrophotalea carbinolica (strain DSM 2380 / NBRC 103641 / GraBd1) (Pelobacter carbinolicus).